The sequence spans 76 residues: Virulence-associated protein VagC (76 aa).

In terms of domain architecture, SpoVT-AbrB spans 4–45 (VSIFKNGNNRAIRLPRDLDFEGVSELEIVREGDSIILRPVRP).

The protein belongs to the VapB family.

The chain is Virulence-associated protein VagC (vagC) from Salmonella dublin.